The primary structure comprises 562 residues: Arylsulfatase H (562 aa).

Ca(2+) is bound by residues D15, D16, and C55. The Nucleophile role is filled by C55. C55 is modified (3-oxoalanine (Cys)). Residue K115 coordinates substrate. The active site involves H117. Helical transmembrane passes span 167-187 (LWIS…PKYA) and 189-209 (WFVV…LFFI). Substrate is bound at residue H271. Residues D323 and N324 each coordinate Ca(2+).

This sequence belongs to the sulfatase family. Requires Ca(2+) as cofactor. The conversion to 3-oxoalanine (also known as C-formylglycine, FGly), of a serine or cysteine residue in prokaryotes and of a cysteine residue in eukaryotes, is critical for catalytic activity.

It is found in the membrane. This chain is Arylsulfatase H (ARSH), found in Canis lupus familiaris (Dog).